The sequence spans 445 residues: UPF0210 protein SEQ_0468 (445 aa).

This sequence belongs to the UPF0210 family. Homodimer.

The protein is UPF0210 protein SEQ_0468 of Streptococcus equi subsp. equi (strain 4047).